We begin with the raw amino-acid sequence, 128 residues long: Keratin-associated protein 21-1 (128 aa).

Residues 11 to 117 (GGCGYGSRYG…RYGCGYGSGC (107 aa)) form a 51 X 2 AA repeats of G-[YCGS] region.

The protein belongs to the KRTAP type 21 family. In terms of assembly, interacts with hair keratins. In terms of tissue distribution, strong expression in narrowly defined pattern restricted to the lower and middle cortical regions of the hair shaft in both developing and cycling hair. During hair follicle regression (catagen), expression levels decrease until expression is no longer detectable in follicles at resting stage (telogen).

Its function is as follows. In the hair cortex, hair keratin intermediate filaments are embedded in an interfilamentous matrix, consisting of hair keratin-associated proteins (KRTAP), which are essential for the formation of a rigid and resistant hair shaft through their extensive disulfide bond cross-linking with abundant cysteine residues of hair keratins. The matrix proteins include the high-sulfur and high-glycine-tyrosine keratins. The protein is Keratin-associated protein 21-1 (Krtap21-1) of Mus musculus (Mouse).